A 153-amino-acid chain; its full sequence is Movement protein (153 aa).

Disordered regions lie at residues 1 to 24 (MAQE…EQDP) and 121 to 153 (PWVA…RNQR). A compositionally biased stretch (polar residues) spans 121 to 138 (PWVATLIPSQSAGPPQRS).

It belongs to the luteoviruses movement protein family.

Functionally, transports viral genome to neighboring plant cells directly through plasmosdesmata, without any budding. The movement protein allows efficient cell to cell propagation, by bypassing the host cell wall barrier. The chain is Movement protein from Avena byzantina (Oat).